The chain runs to 328 residues: Phenylalanine--tRNA ligase alpha subunit (328 aa).

Position 245 (Glu-245) interacts with Mg(2+).

This sequence belongs to the class-II aminoacyl-tRNA synthetase family. Phe-tRNA synthetase alpha subunit type 1 subfamily. In terms of assembly, tetramer of two alpha and two beta subunits. Mg(2+) is required as a cofactor.

The protein resides in the cytoplasm. It catalyses the reaction tRNA(Phe) + L-phenylalanine + ATP = L-phenylalanyl-tRNA(Phe) + AMP + diphosphate + H(+). The chain is Phenylalanine--tRNA ligase alpha subunit (pheS) from Helicobacter pylori (strain ATCC 700392 / 26695) (Campylobacter pylori).